A 367-amino-acid chain; its full sequence is Pectate lyase 1 (367 aa).

A signal peptide spans 1-21 (MASPCLIAVLVFLCAIVSCYS). Cysteine 28 and cysteine 45 form a disulfide bridge. The tract at residues 38-305 (NRMKLADCAV…YKKEVTKRIG (268 aa)) is beta-helix. The tract at residues 92–104 (IFSQNMNIKLKMP) is igE-binding. Binds to IgE in 5 out of 7 patients tested. The cysteines at positions 128 and 147 are disulfide-linked. Asparagine 148 carries N-linked (GlcNAc...) asparagine glycosylation. Residue aspartate 170 participates in Ca(2+) binding. Residue asparagine 178 is glycosylated (N-linked (GlcNAc...) asparagine). The Ca(2+) site is built by aspartate 194 and aspartate 198. The segment at 239 to 250 (AFNQFGPNAGQR) is igE-binding. Binds to IgE in 6 out of 7 patients tested. Residue arginine 250 is part of the active site. The segment at 251 to 258 (MPRARYGL) is igE-binding. Binds to IgE in 5 out of 7 patients tested. A disulfide bridge connects residues cysteine 306 and cysteine 312. An igE-binding. Binds to IgE in 3 out of 7 patients tested region spans residues 317-327 (WRSTRDAFING).

It belongs to the polysaccharide lyase 1 family. Amb a subfamily. The cofactor is Ca(2+). In terms of processing, N-glycosylated; consists of complex-type N-glycans containing the Lewis a antigen (Galbeta1-3(Fucalpha1-4)GlcNAcbeta1-). Expressed in pollen (at protein level).

It carries out the reaction Eliminative cleavage of (1-&gt;4)-alpha-D-galacturonan to give oligosaccharides with 4-deoxy-alpha-D-galact-4-enuronosyl groups at their non-reducing ends.. The protein operates within glycan metabolism; pectin degradation; 2-dehydro-3-deoxy-D-gluconate from pectin: step 2/5. Functionally, has low pectate lyase activity. This Juniperus ashei (Ozark white cedar) protein is Pectate lyase 1.